The sequence spans 157 residues: 2-C-methyl-D-erythritol 2,4-cyclodiphosphate synthase (157 aa).

A divalent metal cation-binding residues include D9 and H11. 4-CDP-2-C-methyl-D-erythritol 2-phosphate contacts are provided by residues 9–11 (DVH) and 35–36 (HS). H43 is an a divalent metal cation binding site. 4-CDP-2-C-methyl-D-erythritol 2-phosphate-binding positions include 57 to 59 (DIG), 62 to 66 (FPDTD), 101 to 107 (AEKPKMA), 133 to 136 (TTTE), F140, and R143.

The protein belongs to the IspF family. In terms of assembly, homotrimer. A divalent metal cation serves as cofactor.

The enzyme catalyses 4-CDP-2-C-methyl-D-erythritol 2-phosphate = 2-C-methyl-D-erythritol 2,4-cyclic diphosphate + CMP. It participates in isoprenoid biosynthesis; isopentenyl diphosphate biosynthesis via DXP pathway; isopentenyl diphosphate from 1-deoxy-D-xylulose 5-phosphate: step 4/6. Its function is as follows. Involved in the biosynthesis of isopentenyl diphosphate (IPP) and dimethylallyl diphosphate (DMAPP), two major building blocks of isoprenoid compounds. Catalyzes the conversion of 4-diphosphocytidyl-2-C-methyl-D-erythritol 2-phosphate (CDP-ME2P) to 2-C-methyl-D-erythritol 2,4-cyclodiphosphate (ME-CPP) with a corresponding release of cytidine 5-monophosphate (CMP). This is 2-C-methyl-D-erythritol 2,4-cyclodiphosphate synthase from Listeria monocytogenes serotype 4a (strain HCC23).